A 425-amino-acid polypeptide reads, in one-letter code: RNA polymerase II-associated factor 1 homolog (425 aa).

Residues 152-174 are a coiled coil; that stretch reads KKNQQVEDMYRDKQSQIDAINKT. Residues 331–425 are disordered; that stretch reads SRKSKLTLTY…KEPTVDSDSD (95 aa). Basic and acidic residues-rich tracts occupy residues 344–380 and 393–402; these read SELE…KEEG and DKPQKSRSDS.

This sequence belongs to the PAF1 family. In terms of assembly, component of the PAF1 complex which consists of at least cdc-73, ctr-9, leo-1, pafo-1 and rtfo-1.

The protein resides in the nucleus. Functionally, component of the PAF1 complex which is a multifunctional complex involved in transcription initiation via genetic interactions with TATA-binding proteins, elongation and transcription-coupled histone modification. In Caenorhabditis elegans, this protein is RNA polymerase II-associated factor 1 homolog.